Consider the following 35-residue polypeptide: Fatty acid synthase (35 aa).

The active site involves S12.

Homodimer which is arranged in a head to tail fashion. Interacts with CEACAM1; this interaction is insulin and phosphorylation-dependent; reduces fatty-acid synthase activity.

It is found in the cytoplasm. It localises to the melanosome. The catalysed reaction is acetyl-CoA + n malonyl-CoA + 2n NADPH + 2n H(+) = a long-chain fatty acid + (n+1) CoA + n CO2 + 2n NADP(+).. In terms of biological role, fatty acid synthetase catalyzes the formation of long-chain fatty acids from acetyl-CoA, malonyl-CoA and NADPH. This multifunctional protein has 7 catalytic activities as an acyl carrier protein. This fragment is from the acyltransferase domain of the fatty acid synthetase. The sequence is that of Fatty acid synthase (FASN) from Capra hircus (Goat).